The primary structure comprises 353 residues: MTIALGKYTKDEKDLFDIMDDWLRRDRFVFVGWSGLLLFPCAYFALGGWFTGTTFVTSWYTHGLASSYLEGCNFLTAAVSTPANSLAHSLLLLWGPEAQGDFTRWCQLGGLWTFVALHGAFALIGFMLRQFELARSVQLRPYNAIAFSGPIAVFVSVFLIYPLGQSGWFFAPSFGVAAIFRFILFFQGFHNWTLNPFHMMGVAGVLGAALLCAIHGATVENTLFEDGDGANTFRAFNPTQAEETYSMVTANRFWSQIFGVAFSNKRWLHFFMLFVPVTGLWMSALGVVGLALNLRAYDFVSQEIRAAEDPEFETFYTKNILLNEGIRAWMAAQDQPHENLIFPEEVLPRGNAL.

At T2 the chain carries N-acetylthreonine. T2 is modified (phosphothreonine). Residues 41-61 form a helical membrane-spanning segment; it reads CAYFALGGWFTGTTFVTSWYT. H118 serves as a coordination point for chlorophyll a. The chain crosses the membrane as a helical span at residues 125–141; that stretch reads GFMLRQFELARSVQLRP. The pheophytin a site is built by Q130 and N143. A helical membrane pass occupies residues 153 to 166; that stretch reads VFVSVFLIYPLGQS. Residue H198 coordinates chlorophyll a. The helical transmembrane segment at 208-228 threads the bilayer; sequence AALLCAIHGATVENTLFEDGD. A plastoquinone contacts are provided by H215 and F262. H215 contributes to the Fe cation binding site. H269 contacts Fe cation. A helical transmembrane segment spans residues 279-295; the sequence is GLWMSALGVVGLALNLR.

Belongs to the reaction center PufL/M/PsbA/D family. In terms of assembly, PSII is composed of 1 copy each of membrane proteins PsbA, PsbB, PsbC, PsbD, PsbE, PsbF, PsbH, PsbI, PsbJ, PsbK, PsbL, PsbM, PsbT, PsbX, PsbY, PsbZ, Psb30/Ycf12, at least 3 peripheral proteins of the oxygen-evolving complex and a large number of cofactors. It forms dimeric complexes. Requires The D1/D2 heterodimer binds P680, chlorophylls that are the primary electron donor of PSII, and subsequent electron acceptors. It shares a non-heme iron and each subunit binds pheophytin, quinone, additional chlorophylls, carotenoids and lipids. There is also a Cl(-1) ion associated with D1 and D2, which is required for oxygen evolution. The PSII complex binds additional chlorophylls, carotenoids and specific lipids. as cofactor.

It is found in the plastid. It localises to the chloroplast thylakoid membrane. The catalysed reaction is 2 a plastoquinone + 4 hnu + 2 H2O = 2 a plastoquinol + O2. In terms of biological role, photosystem II (PSII) is a light-driven water:plastoquinone oxidoreductase that uses light energy to abstract electrons from H(2)O, generating O(2) and a proton gradient subsequently used for ATP formation. It consists of a core antenna complex that captures photons, and an electron transfer chain that converts photonic excitation into a charge separation. The D1/D2 (PsbA/PsbD) reaction center heterodimer binds P680, the primary electron donor of PSII as well as several subsequent electron acceptors. D2 is needed for assembly of a stable PSII complex. The chain is Photosystem II D2 protein from Aethionema grandiflorum (Persian stone-cress).